We begin with the raw amino-acid sequence, 228 residues long: Large ribosomal subunit protein bL25 (228 aa).

The interval 196 to 228 (EEAAVAEAQSAESAEGKAEAEAEATNEKNKSEA) is disordered. The span at 209–228 (AEGKAEAEAEATNEKNKSEA) shows a compositional bias: basic and acidic residues.

The protein belongs to the bacterial ribosomal protein bL25 family. CTC subfamily. As to quaternary structure, part of the 50S ribosomal subunit; part of the 5S rRNA/L5/L18/L25 subcomplex. Contacts the 5S rRNA. Binds to the 5S rRNA independently of L5 and L18.

Its function is as follows. This is one of the proteins that binds to the 5S RNA in the ribosome where it forms part of the central protuberance. The sequence is that of Large ribosomal subunit protein bL25 from Methylorubrum extorquens (strain CM4 / NCIMB 13688) (Methylobacterium extorquens).